We begin with the raw amino-acid sequence, 329 residues long: DNA-directed RNA polymerase subunit alpha (329 aa).

The interval 1–234 (MQGSVTEFLK…EQLDAFVELR (234 aa)) is alpha N-terminal domain (alpha-NTD). The tract at residues 248-329 (FDPILLRPVD…WPPASLADDL (82 aa)) is alpha C-terminal domain (alpha-CTD).

The protein belongs to the RNA polymerase alpha chain family. Homodimer. The RNAP catalytic core consists of 2 alpha, 1 beta, 1 beta' and 1 omega subunit. When a sigma factor is associated with the core the holoenzyme is formed, which can initiate transcription.

It catalyses the reaction RNA(n) + a ribonucleoside 5'-triphosphate = RNA(n+1) + diphosphate. Functionally, DNA-dependent RNA polymerase catalyzes the transcription of DNA into RNA using the four ribonucleoside triphosphates as substrates. This Shewanella amazonensis (strain ATCC BAA-1098 / SB2B) protein is DNA-directed RNA polymerase subunit alpha.